A 645-amino-acid chain; its full sequence is 1,4-alpha-glucan branching enzyme GlgB (645 aa).

Residue Asp-309 is the Nucleophile of the active site. Residue Glu-352 is the Proton donor of the active site. The tract at residues 619–645 (VKTRKGSKKQDGSKTKVRSNVTSRGKR) is disordered. The segment covering 636-645 (RSNVTSRGKR) has biased composition (polar residues).

This sequence belongs to the glycosyl hydrolase 13 family. GlgB subfamily. Monomer.

The catalysed reaction is Transfers a segment of a (1-&gt;4)-alpha-D-glucan chain to a primary hydroxy group in a similar glucan chain.. It functions in the pathway glycan biosynthesis; glycogen biosynthesis. Its function is as follows. Catalyzes the formation of the alpha-1,6-glucosidic linkages in glycogen by scission of a 1,4-alpha-linked oligosaccharide from growing alpha-1,4-glucan chains and the subsequent attachment of the oligosaccharide to the alpha-1,6 position. The chain is 1,4-alpha-glucan branching enzyme GlgB from Bacillus cereus (strain 03BB102).